Consider the following 378-residue polypeptide: Chaperone protein DnaJ (378 aa).

Residues D5–G70 enclose the J domain. A CR-type zinc finger spans residues G134 to T212. The Zn(2+) site is built by C147, C150, C164, C167, C186, C189, C200, and C203. CXXCXGXG motif repeat units lie at residues C147–G154, C164–G171, C186–G193, and C200–G207.

It belongs to the DnaJ family. In terms of assembly, homodimer. Zn(2+) is required as a cofactor.

It is found in the cytoplasm. In terms of biological role, participates actively in the response to hyperosmotic and heat shock by preventing the aggregation of stress-denatured proteins and by disaggregating proteins, also in an autonomous, DnaK-independent fashion. Unfolded proteins bind initially to DnaJ; upon interaction with the DnaJ-bound protein, DnaK hydrolyzes its bound ATP, resulting in the formation of a stable complex. GrpE releases ADP from DnaK; ATP binding to DnaK triggers the release of the substrate protein, thus completing the reaction cycle. Several rounds of ATP-dependent interactions between DnaJ, DnaK and GrpE are required for fully efficient folding. Also involved, together with DnaK and GrpE, in the DNA replication of plasmids through activation of initiation proteins. This is Chaperone protein DnaJ from Colwellia psychrerythraea (strain 34H / ATCC BAA-681) (Vibrio psychroerythus).